We begin with the raw amino-acid sequence, 197 residues long: UPF0725 protein At5g41640 (197 aa).

Belongs to the UPF0725 (EMB2204) family.

This chain is UPF0725 protein At5g41640, found in Arabidopsis thaliana (Mouse-ear cress).